We begin with the raw amino-acid sequence, 316 residues long: Triplex capsid protein 2 (316 aa).

It belongs to the herpesviridae TRX2 protein family. As to quaternary structure, interacts with TRX1 and major capisd protein/MCP.

Its subcellular location is the virion. The protein localises to the host nucleus. Its function is as follows. Structural component of the T=16 icosahedral capsid. The capsid is composed of pentamers and hexamers of major capsid protein/MCP, which are linked together by heterotrimers called triplexes. These triplexes are formed by a single molecule of triplex protein 1/TRX1 and two copies of triplex protein 2/TRX2. Additionally, TRX1 is required for efficient transport of TRX2 to the nucleus, which is the site of capsid assembly. This Homo sapiens (Human) protein is Triplex capsid protein 2.